Reading from the N-terminus, the 459-residue chain is Nuclear distribution protein PAC1-2 (459 aa).

The stretch at 56 to 83 (TSIVRLQKKIMDLESRNAALQTELANLT) forms a coiled coil. 8 WD repeats span residues 108-149 (SHRD…RTVK), 151-191 (HTRA…KNIR), 195-244 (GHDH…KTLR), 246-284 (HTAW…SDHK), 306-348 (QYLA…LGTL), 350-389 (GHDN…KCVK), 394-438 (AHER…DTPD), and 440-459 (QVRC…VFAD).

The protein belongs to the WD repeat LIS1/nudF family. Self-associates. Interacts with NDL1 and dynein.

The protein resides in the cytoplasm. Its subcellular location is the cytoskeleton. It localises to the spindle pole. Its function is as follows. Positively regulates the activity of the minus-end directed microtubule motor protein dynein. May enhance dynein-mediated microtubule sliding by targeting dynein to the microtubule plus end. Required for nuclear migration during vegetative growth as well as development. Required for retrograde early endosome (EE) transport from the hyphal tip. Required for localization of dynein to the mitotic spindle poles. Recruits additional proteins to the dynein complex at SPBs. The sequence is that of Nuclear distribution protein PAC1-2 from Uncinocarpus reesii (strain UAMH 1704).